The following is an 849-amino-acid chain: Leucine--tRNA ligase (849 aa).

The short motif at 44 to 54 (PYPSGRIHMGH) is the 'HIGH' region element. Positions 620 to 624 (KMSKS) match the 'KMSKS' region motif. An ATP-binding site is contributed by lysine 623.

Belongs to the class-I aminoacyl-tRNA synthetase family.

It is found in the cytoplasm. The enzyme catalyses tRNA(Leu) + L-leucine + ATP = L-leucyl-tRNA(Leu) + AMP + diphosphate. The polypeptide is Leucine--tRNA ligase (Sphingopyxis alaskensis (strain DSM 13593 / LMG 18877 / RB2256) (Sphingomonas alaskensis)).